Reading from the N-terminus, the 169-residue chain is MPLLDSFTVDHTRMNAPAVRVAKTMSTPKGDTITVFDLRFCAPNKDILSERGIHTLEHLFAGFMRDHLNGEGVEIIDISPMGCRTGFYMSLIGEPAEKRVADAWLAAMEDVLNVVDQKAIPELNEYQCGTYEMHSLSQAQDIAKAVIAAGISVNRNDELKLSDEILHKL.

Fe cation contacts are provided by H54, H58, and C128.

It belongs to the LuxS family. Homodimer. Fe cation is required as a cofactor.

The enzyme catalyses S-(5-deoxy-D-ribos-5-yl)-L-homocysteine = (S)-4,5-dihydroxypentane-2,3-dione + L-homocysteine. In terms of biological role, involved in the synthesis of autoinducer 2 (AI-2) which is secreted by bacteria and is used to communicate both the cell density and the metabolic potential of the environment. The regulation of gene expression in response to changes in cell density is called quorum sensing. Catalyzes the transformation of S-ribosylhomocysteine (RHC) to homocysteine (HC) and 4,5-dihydroxy-2,3-pentadione (DPD). The polypeptide is S-ribosylhomocysteine lyase (Shewanella amazonensis (strain ATCC BAA-1098 / SB2B)).